Here is a 525-residue protein sequence, read N- to C-terminus: Nucleolar and spindle-associated protein 1-A (525 aa).

Disordered stretches follow at residues 46 to 205 (ESKD…LHEA), 248 to 292 (EKTP…RFSA), 373 to 397 (TPES…PEKA), and 451 to 525 (SLSR…VPVQ). The segment covering 58–69 (SSLTDTDELNSS) has biased composition (polar residues). Positions 82-92 (THRRGRGRKPL) are enriched in basic residues. Polar residues predominate over residues 106 to 127 (SVGTGTESLASETDNTQDQNCL). Residues 160 to 169 (TTEKRQKKAS) show a composition bias toward basic and acidic residues. The span at 270–285 (PPTTGASPSRTPTNQR) shows a compositional bias: polar residues. The segment covering 476-494 (CGSNNNVSVLKNNFKQPHL) has biased composition (polar residues). A compositionally biased stretch (basic and acidic residues) spans 495-514 (QTREDRRKQHEQDRKGKRDQ).

Belongs to the NUSAP family. As to quaternary structure, interacts with DNA. Interacts with microtubules, ipo7, kpna2 and kpnb1. Microtubule stabilization is inhibited by ipo7 and kpna2, while microtubule bundling is inhibited by kpnb1. Active GTP-bound ran causes dissociation of ipo7 and kpnb1.

Its subcellular location is the cytoplasm. It localises to the nucleus. The protein resides in the cytoskeleton. The protein localises to the spindle. Its function is as follows. Microtubule-associated protein with the capacity to bundle and stabilize microtubules. May associate with chromosomes and promote the organization of meiotic or mitotic spindle microtubules around them. In Xenopus laevis (African clawed frog), this protein is Nucleolar and spindle-associated protein 1-A (nusap1-a).